The sequence spans 104 residues: Large ribosomal subunit protein eL36 (104 aa).

The protein belongs to the eukaryotic ribosomal protein eL36 family.

The chain is Large ribosomal subunit protein eL36 (RPL36) from Tetrahymena thermophila (strain SB210).